Consider the following 217-residue polypeptide: ATP synthase subunit a (217 aa).

6 consecutive transmembrane segments (helical) span residues 5–25 (EHVI…LAAG), 63–83 (LIAS…LPFV), 89–109 (NINT…FEGF), 120–140 (FMGP…MSHL), 157–177 (GAIL…TLAV), and 191–213 (LAIV…GAVV).

This sequence belongs to the ATPase A chain family. As to quaternary structure, F-type ATPases have 2 components, CF(1) - the catalytic core - and CF(0) - the membrane proton channel. CF(1) has five subunits: alpha(3), beta(3), gamma(1), delta(1), epsilon(1). CF(0) has three main subunits: a(1), b(2) and c(9-12). The alpha and beta chains form an alternating ring which encloses part of the gamma chain. CF(1) is attached to CF(0) by a central stalk formed by the gamma and epsilon chains, while a peripheral stalk is formed by the delta and b chains.

Its subcellular location is the cell inner membrane. In terms of biological role, key component of the proton channel; it plays a direct role in the translocation of protons across the membrane. The polypeptide is ATP synthase subunit a (Hydrogenobaculum sp. (strain Y04AAS1)).